The following is a 261-amino-acid chain: uncharacterized protein (261 aa).

22–46 lines the NADP(+) pocket; that stretch reads IVTGGNSGLGQAFAMALAKAGANIF. Serine 153 is a substrate binding site. Tyrosine 166 serves as the catalytic Proton acceptor.

It belongs to the short-chain dehydrogenases/reductases (SDR) family.

This is an uncharacterized protein from Escherichia coli (strain K12).